Here is a 45-residue protein sequence, read N- to C-terminus: Metallothionein-like protein 1A (45 aa).

This sequence belongs to the metallothionein superfamily. Type 15 family. As to expression, expressed in phloem and mesophyll cells of leaves, vascular tissues of cotyledons, sepals and petals. Expressed in anthers. Expressed in root endodermis and at lower levels in cortex of mature region of roots.

Functionally, metallothioneins have a high content of cysteine residues that bind various heavy metals. Functions as a metal chelator of copper (Cu) and zinc (Zn). Plays a role in Cu homeostasis in the roots under elevated Cu concentration. Functions cooperatively with the phytochelatin synthase PCS1 to protect plants from Cu and cadmium (Cd) toxicity. Plays a role in Cu homeostasis, specifically in the remobilization of Cu from senescing leaves. The mobilization of Cu from internal sources is important for seed development. Confers tolerance to Cd and plays a role in Cd and Zn homeostasis. The sequence is that of Metallothionein-like protein 1A (MT1A) from Arabidopsis thaliana (Mouse-ear cress).